The primary structure comprises 127 residues: Small ribosomal subunit protein eS8 (127 aa).

The protein belongs to the eukaryotic ribosomal protein eS8 family. In terms of assembly, part of the 30S ribosomal subunit.

This chain is Small ribosomal subunit protein eS8, found in Pyrococcus furiosus (strain ATCC 43587 / DSM 3638 / JCM 8422 / Vc1).